Reading from the N-terminus, the 469-residue chain is Keratin, type I cytoskeletal 26 (469 aa).

The segment at 1-82 (MSFRLSSGSR…ENEHGLLPGN (82 aa)) is head. The interval 83–118 (EKVTLQNLNDRLASYLDHVCTLEEANADLEQKIKGW) is coil 1A. An IF rod domain is found at 83–398 (EKVTLQNLND…KLIDGEGRKS (316 aa)). Positions 119 to 140 (YEKYGPGSGRQLAYDCSKYFSV) are linker 1. A coil 1B region spans residues 141–232 (TEDLKRQIIS…KNHQEEMKVM (92 aa)). Positions 233 to 255 (QGAAGGNVNVEINAAPGVDLTVL) are linker 12. The interval 256 to 394 (LNNMRAEYED…EMYCKLIDGE (139 aa)) is coil 2. The segment at 395–465 (GRKSKSTYCK…NITMEQRLPS (71 aa)) is tail. Disordered stretches follow at residues 398 to 421 (SKST…KDSK) and 450 to 469 (KSSK…KVPQ). Residues 405–421 (SEGRGPKNSENQVKDSK) are compositionally biased toward basic and acidic residues.

It belongs to the intermediate filament family. As to quaternary structure, heterotetramer of two type I and two type II keratins.

This Bos taurus (Bovine) protein is Keratin, type I cytoskeletal 26.